We begin with the raw amino-acid sequence, 361 residues long: MISKEEILSIYEGYNKEEITIVTVGSHTSLHILKGAKLEGFSTAVITTKDRATPYKRFGVADKYIYVDNFSDISNEEIQKQLIEMNAIIIPHGSFIAYCGLDNLENNFKVPMFGNRQILRWEAERDLEGKLLKESGLRIPKKLNSPDEINCPVMVKFPGARGGRGYFPCSTTEEFWKKVEIFKERGILTDEDVGNAHIEEYVVGTNYCIHYFYSPLKNQVELMGIDSRYESNIDGIVRVPAKDQMELDINPSYVISGNFPVVIRESLLPQVFDMGDKLVAKAEEMVAPGMIGPFCLQSLCNDSLELVVFEMSARIDGGTNSFMNGSAYSCLYSGEPLSMGQRIAKEIKLALELDMMDKILY.

5-amino-1-(5-phospho-beta-D-ribosyl)imidazole-4-carboxamide is bound by residues histidine 27 and serine 94. Residues 116–348 form the ATP-grasp domain; that stretch reads RQILRWEAER…MGQRIAKEIK (233 aa). Residues 146–208 and glutamate 230 each bind ATP; that span reads PDEI…TNYC. Asparagine 258 lines the 5-amino-1-(5-phospho-beta-D-ribosyl)imidazole-4-carboxamide pocket. Mg(2+) contacts are provided by glutamine 297 and glutamate 310.

It belongs to the phosphohexose mutase family. Mg(2+) serves as cofactor. It depends on Mn(2+) as a cofactor.

The catalysed reaction is 5-amino-1-(5-phospho-beta-D-ribosyl)imidazole-4-carboxamide + formate + ATP = 5-formamido-1-(5-phospho-D-ribosyl)imidazole-4-carboxamide + ADP + phosphate. Its pathway is purine metabolism; IMP biosynthesis via de novo pathway; 5-formamido-1-(5-phospho-D-ribosyl)imidazole-4-carboxamide from 5-amino-1-(5-phospho-D-ribosyl)imidazole-4-carboxamide (formate route): step 1/1. Catalyzes the ATP- and formate-dependent formylation of 5-aminoimidazole-4-carboxamide-1-beta-d-ribofuranosyl 5'-monophosphate (AICAR) to 5-formaminoimidazole-4-carboxamide-1-beta-d-ribofuranosyl 5'-monophosphate (FAICAR) in the absence of folates. This is 5-formaminoimidazole-4-carboxamide-1-(beta)-D-ribofuranosyl 5'-monophosphate synthetase from Methanococcus aeolicus (strain ATCC BAA-1280 / DSM 17508 / OCM 812 / Nankai-3).